A 243-amino-acid polypeptide reads, in one-letter code: UPF0246 protein M6_Spy1787 (243 aa).

This sequence belongs to the UPF0246 family.

This chain is UPF0246 protein M6_Spy1787, found in Streptococcus pyogenes serotype M6 (strain ATCC BAA-946 / MGAS10394).